Consider the following 250-residue polypeptide: tRNA (guanine-N(1)-)-methyltransferase (250 aa).

S-adenosyl-L-methionine-binding positions include glycine 116 and 136 to 141 (IGDYVL).

This sequence belongs to the RNA methyltransferase TrmD family. Homodimer.

The protein resides in the cytoplasm. The enzyme catalyses guanosine(37) in tRNA + S-adenosyl-L-methionine = N(1)-methylguanosine(37) in tRNA + S-adenosyl-L-homocysteine + H(+). Functionally, specifically methylates guanosine-37 in various tRNAs. This is tRNA (guanine-N(1)-)-methyltransferase from Pseudomonas savastanoi pv. phaseolicola (strain 1448A / Race 6) (Pseudomonas syringae pv. phaseolicola (strain 1448A / Race 6)).